Reading from the N-terminus, the 57-residue chain is Protein translocase subunit SecE (57 aa).

The helical transmembrane segment at A34–V54 threads the bilayer.

It belongs to the SecE/SEC61-gamma family. In terms of assembly, component of the Sec protein translocase complex. Heterotrimer consisting of SecY (alpha), SecG (beta) and SecE (gamma) subunits. The heterotrimers can form oligomers, although 1 heterotrimer is thought to be able to translocate proteins. Interacts with the ribosome. May interact with SecDF, and other proteins may be involved.

The protein resides in the cell membrane. Functionally, essential subunit of the Sec protein translocation channel SecYEG. Clamps together the 2 halves of SecY. May contact the channel plug during translocation. This is Protein translocase subunit SecE from Halobacterium salinarum (strain ATCC 29341 / DSM 671 / R1).